Here is a 193-residue protein sequence, read N- to C-terminus: nitroreductase FRM2 (193 aa).

The protein belongs to the nitroreductase family. FMN is required as a cofactor.

The protein resides in the cytoplasm. The protein localises to the nucleus. It carries out the reaction 4-(hydroxyamino)quinoline N-oxide + 2 NAD(+) + H2O = 4-nitroquinoline N-oxide + 2 NADH + 2 H(+). Type II nitroreductase, able to reduce 4-nitroquinoline N-oxide (4-NQO) into 4-aminoquinoline-N-oxide (4-AQO) via 4-hydroxyaminoquinoline (4-HAQO), using NADH as reductant. involved in the oxidative stress response. Plays a possible role in the metal stress response. Involved in negative regulation of fatty acid metabolism. This chain is nitroreductase FRM2, found in Saccharomyces cerevisiae (strain ATCC 204508 / S288c) (Baker's yeast).